Reading from the N-terminus, the 193-residue chain is Ribonuclease HII (193 aa).

Residues 3–192 (SLVAGIDEVG…VRAVIDRSSA (190 aa)) enclose the RNase H type-2 domain. Positions 9, 10, and 101 each coordinate a divalent metal cation.

Belongs to the RNase HII family. Requires Mn(2+) as cofactor. Mg(2+) serves as cofactor.

The protein resides in the cytoplasm. It catalyses the reaction Endonucleolytic cleavage to 5'-phosphomonoester.. Functionally, endonuclease that specifically degrades the RNA of RNA-DNA hybrids. This chain is Ribonuclease HII, found in Methylococcus capsulatus (strain ATCC 33009 / NCIMB 11132 / Bath).